Here is a 365-residue protein sequence, read N- to C-terminus: GDSL esterase/lipase At3g62280 (365 aa).

Positions 1-25 (MDYTVSSLQCFFLVLCLSLLVCSNS) are cleaved as a signal peptide. Serine 43 serves as the catalytic Nucleophile. Asparagine 137, asparagine 178, and asparagine 231 each carry an N-linked (GlcNAc...) asparagine glycan. Catalysis depends on residues aspartate 333 and histidine 336.

Belongs to the 'GDSL' lipolytic enzyme family.

The protein resides in the secreted. The sequence is that of GDSL esterase/lipase At3g62280 from Arabidopsis thaliana (Mouse-ear cress).